Consider the following 419-residue polypeptide: Serine hydroxymethyltransferase (419 aa).

Residues L122 and 126-128 (GHL) contribute to the (6S)-5,6,7,8-tetrahydrofolate site. An N6-(pyridoxal phosphate)lysine modification is found at K231. 354–356 (SPF) contributes to the (6S)-5,6,7,8-tetrahydrofolate binding site.

This sequence belongs to the SHMT family. Homodimer. It depends on pyridoxal 5'-phosphate as a cofactor.

It localises to the cytoplasm. It carries out the reaction (6R)-5,10-methylene-5,6,7,8-tetrahydrofolate + glycine + H2O = (6S)-5,6,7,8-tetrahydrofolate + L-serine. It participates in one-carbon metabolism; tetrahydrofolate interconversion. Its pathway is amino-acid biosynthesis; glycine biosynthesis; glycine from L-serine: step 1/1. Its function is as follows. Catalyzes the reversible interconversion of serine and glycine with tetrahydrofolate (THF) serving as the one-carbon carrier. This reaction serves as the major source of one-carbon groups required for the biosynthesis of purines, thymidylate, methionine, and other important biomolecules. Also exhibits THF-independent aldolase activity toward beta-hydroxyamino acids, producing glycine and aldehydes, via a retro-aldol mechanism. This chain is Serine hydroxymethyltransferase, found in Exiguobacterium sibiricum (strain DSM 17290 / CCUG 55495 / CIP 109462 / JCM 13490 / 255-15).